Consider the following 898-residue polypeptide: Coiled-coil domain-containing protein 186 (898 aa).

3 disordered regions span residues 1–43 (MSET…NESK), 68–95 (NYIP…QIAN), and 702–749 (RRKL…SSVA). Ser2 carries the post-translational modification N-acetylserine. Polar residues predominate over residues 82–95 (KTDTGSENSEQIAN). The stretch at 201–712 (KYLQQEHIIK…RKLDQVESGS (512 aa)) forms a coiled coil. The span at 703-717 (RKLDQVESGSYDKEV) shows a compositional bias: basic and acidic residues. A compositionally biased stretch (low complexity) spans 718–734 (SSMGSRSSSSGSLNARS). Ser740 carries the phosphoserine modification. Coiled coils occupy residues 759–803 (AMLI…IQSY) and 855–894 (KLQA…LEQR).

The polypeptide is Coiled-coil domain-containing protein 186 (CCDC186) (Homo sapiens (Human)).